Reading from the N-terminus, the 111-residue chain is Small ribosomal subunit protein uS10 (111 aa).

This sequence belongs to the universal ribosomal protein uS10 family. Part of the 30S ribosomal subunit.

In terms of biological role, involved in the binding of tRNA to the ribosomes. In Ehrlichia ruminantium (strain Welgevonden), this protein is Small ribosomal subunit protein uS10.